The sequence spans 70 residues: DNA gyrase inhibitor YacG (70 aa).

Zn(2+) is bound by residues Cys-9, Cys-12, Cys-28, and Cys-32. Residues 44–70 (SRKIPGSSIDPESIVTTNNKQDNVDEQ) form a disordered region.

Belongs to the DNA gyrase inhibitor YacG family. Interacts with GyrB. It depends on Zn(2+) as a cofactor.

Inhibits all the catalytic activities of DNA gyrase by preventing its interaction with DNA. Acts by binding directly to the C-terminal domain of GyrB, which probably disrupts DNA binding by the gyrase. This chain is DNA gyrase inhibitor YacG, found in Legionella pneumophila subsp. pneumophila (strain Philadelphia 1 / ATCC 33152 / DSM 7513).